The sequence spans 419 residues: Mitogen-activated protein kinase pmk-2 (419 aa).

In terms of domain architecture, Protein kinase spans 49–350; sequence YNSLKPLGEG…VSSALRHDYL (302 aa). ATP-binding positions include 55 to 63 and Lys78; that span reads LGEGAYGVV. Asp210 serves as the catalytic Proton acceptor. A Phosphothreonine modification is found at Thr222. A TXY motif is present at residues 222–224; it reads TGY. Phosphotyrosine is present on Tyr224.

This sequence belongs to the protein kinase superfamily. CMGC Ser/Thr protein kinase family. MAP kinase subfamily. Requires Mg(2+) as cofactor. Dually phosphorylated on Thr-222 and Tyr-224, which activates the enzyme.

The protein localises to the cytoplasm. The enzyme catalyses L-seryl-[protein] + ATP = O-phospho-L-seryl-[protein] + ADP + H(+). It catalyses the reaction L-threonyl-[protein] + ATP = O-phospho-L-threonyl-[protein] + ADP + H(+). Activated by phosphorylation on threonine and tyrosine. Inhibited by pyridinyl-imidazole related compounds. Responds to activation by environmental stress and pro-inflammatory cytokines by phosphorylating downstream targets. The protein is Mitogen-activated protein kinase pmk-2 (pmk-2) of Caenorhabditis elegans.